A 462-amino-acid polypeptide reads, in one-letter code: Chitinase-like mite allergen Der f 18.0101 (462 aa).

An N-terminal signal peptide occupies residues 1 to 25 (MTRFSLTVLAVLAACFGSNIRPNVA). The GH18 domain occupies 29–378 (PKTVCYYESW…HAIQSNYYHG (350 aa)). C33 and C58 are oxidised to a cystine. N338 is a glycosylation site (N-linked (GlcNAc...) asparagine). The region spanning 404–462 (VFHCHEEGFFRDKTYCATYYECKKGDFGLEKTVHHCANHLQAFDEVSRTCIDHTKIPGC) is the Chitin-binding type-2 domain. C439 and C453 are joined by a disulfide.

The protein belongs to the glycosyl hydrolase 18 family. Chitinase class II subfamily. In terms of tissue distribution, expressed in the upper digestive tract. Staining is observed in the ventriculus, and in very rare individuals, also in the intestine or esophagus. No expression in fecal pellets neither inside the rectum nor defecated outside of the body.

It localises to the secreted. Probably a non-catalytic chitinase-like protein, which binds to insoluble chitin and enhances the activity of the catalytic chitinases. Has weak chitin-binding activity. In Dermatophagoides farinae (American house dust mite), this protein is Chitinase-like mite allergen Der f 18.0101.